The primary structure comprises 443 residues: Methyl-coenzyme M reductase II subunit beta (443 aa).

Tyr-367 contacts coenzyme M. Gly-369 contributes to the coenzyme B binding site.

Belongs to the methyl-coenzyme M reductase beta subunit family. MCR is a hexamer of two alpha, two beta, and two gamma chains, forming a dimer of heterotrimers. Coenzyme F430 serves as cofactor.

It catalyses the reaction coenzyme B + methyl-coenzyme M = methane + coenzyme M-coenzyme B heterodisulfide. It participates in one-carbon metabolism; methyl-coenzyme M reduction; methane from methyl-coenzyme M: step 1/1. Its function is as follows. Component of the methyl-coenzyme M reductase (MCR) I that catalyzes the reductive cleavage of methyl-coenzyme M (CoM-S-CH3 or 2-(methylthio)ethanesulfonate) using coenzyme B (CoB or 7-mercaptoheptanoylthreonine phosphate) as reductant which results in the production of methane and the mixed heterodisulfide of CoB and CoM (CoM-S-S-CoB). This is the final step in methanogenesis. This is Methyl-coenzyme M reductase II subunit beta from Methanothermobacter marburgensis (strain ATCC BAA-927 / DSM 2133 / JCM 14651 / NBRC 100331 / OCM 82 / Marburg) (Methanobacterium thermoautotrophicum).